The primary structure comprises 279 residues: Probable endonuclease 4 (279 aa).

Residues His69, His109, Glu145, Asp179, His182, His216, Asp229, His231, and Glu261 each contribute to the Zn(2+) site.

This sequence belongs to the AP endonuclease 2 family. Zn(2+) serves as cofactor.

The enzyme catalyses Endonucleolytic cleavage to 5'-phosphooligonucleotide end-products.. Its function is as follows. Endonuclease IV plays a role in DNA repair. It cleaves phosphodiester bonds at apurinic or apyrimidinic (AP) sites, generating a 3'-hydroxyl group and a 5'-terminal sugar phosphate. The sequence is that of Probable endonuclease 4 from Desulforapulum autotrophicum (strain ATCC 43914 / DSM 3382 / VKM B-1955 / HRM2) (Desulfobacterium autotrophicum).